Consider the following 336-residue polypeptide: Galactose/methyl galactoside import permease protein MglC (336 aa).

The Periplasmic segment spans residues 1–16 (MSALNKKSFLTYLKEG). The chain crosses the membrane as a helical span at residues 17-37 (GIYVVLLVLLAIIIFQDPTFL). Residues 38 to 52 (SLLNLSNILTQSSVR) are Cytoplasmic-facing. Residues 53–73 (IIIALGVAGLIVTQGTDLSAG) form a helical membrane-spanning segment. Residues 74–106 (RQVGLAAVVAATLLQSMDNANKVFPEMATMPIA) are Periplasmic-facing. 2 helical membrane passes run 107–127 (LVILIVCAIGAVIGLINGLII) and 128–148 (AYLNVTPFITTLGTMIIVYGI). At 149–180 (NSLYYDFVGASPISGFDSGFSTFAQGFVALGS) the chain is on the periplasmic side. A helical membrane pass occupies residues 181–201 (FRLSYITFYALIAVAFVWVLW). Topologically, residues 202 to 226 (NKTRFGKNIFAIGGNPEAAKVSGVN) are cytoplasmic. Residues 227 to 247 (VGLNLLMIYALSGVFYAFGGM) traverse the membrane as a helical segment. At 248-256 (LEAGRIGSA) the chain is on the periplasmic side. Residues 257–277 (TNNLGFMYELDAIAACVVGGV) form a helical membrane-spanning segment. Residue serine 278 is a topological domain, cytoplasmic. Residues 279–299 (FSGGVGTVIGVVTGVIIFTVI) form a helical membrane-spanning segment. The Periplasmic portion of the chain corresponds to 300 to 305 (NYGLTY). The helical transmembrane segment at 306 to 326 (IGVNPYWQYIIKGAIIIFAVA) threads the bilayer. The Cytoplasmic segment spans residues 327–336 (LDSLKYARKK).

The protein belongs to the binding-protein-dependent transport system permease family. AraH/RbsC subfamily. In terms of assembly, the complex is composed of one ATP-binding protein (MglA), two transmembrane proteins (MglC) and a solute-binding protein (MglB).

The protein resides in the cell inner membrane. In terms of biological role, part of the ABC transporter complex MglABC involved in galactose/methyl galactoside import. Probably responsible for the translocation of the substrate across the membrane. The protein is Galactose/methyl galactoside import permease protein MglC (mglC) of Escherichia coli (strain K12).